Consider the following 235-residue polypeptide: tRNA (guanine-N(1)-)-methyltransferase (235 aa).

S-adenosyl-L-methionine contacts are provided by residues Gly-112 and 132-137 (IGDYVI).

It belongs to the RNA methyltransferase TrmD family. As to quaternary structure, homodimer.

Its subcellular location is the cytoplasm. It carries out the reaction guanosine(37) in tRNA + S-adenosyl-L-methionine = N(1)-methylguanosine(37) in tRNA + S-adenosyl-L-homocysteine + H(+). Specifically methylates guanosine-37 in various tRNAs. The sequence is that of tRNA (guanine-N(1)-)-methyltransferase from Anaplasma marginale (strain Florida).